Reading from the N-terminus, the 332-residue chain is 3-ketodihydrosphingosine reductase (332 aa).

Positions 1–25 (MLLLAAAGLVAFVLLLYMVSPLISP) are cleaved as a signal peptide. The Cytoplasmic segment spans residues 26–270 (KPLALPGAHV…GNFNSSIGSD (245 aa)). Positions 39, 41, 42, 43, 64, 68, and 93 each coordinate NADPH. A GXSXG motif is present at residues 39–43 (GGSSG). The Proton donor role is filled by Ser-172. The active-site Proton acceptor is the Tyr-186. Positions 186 and 190 each coordinate NADP(+). Lys-190 serves as the catalytic Lowers pKa of active site Tyr. A helical membrane pass occupies residues 271–291 (GYMLSSLTCGMAPVTSITEGL). The Lumenal portion of the chain corresponds to 292–293 (QQ). Residues 294-314 (VVTMGLFRTIALFYLGSFDNI) traverse the membrane as a helical segment. Residues 315 to 332 (VRRCMVQKAKPEVVDKTA) are Cytoplasmic-facing.

The protein belongs to the short-chain dehydrogenases/reductases (SDR) family.

It is found in the endoplasmic reticulum membrane. It catalyses the reaction sphinganine + NADP(+) = 3-oxosphinganine + NADPH + H(+). The protein operates within lipid metabolism; sphingolipid metabolism. Catalyzes the reduction of 3'-oxosphinganine (3-ketodihydrosphingosine/KDS) to sphinganine (dihydrosphingosine/DHS), the second step of de novo sphingolipid biosynthesis. The protein is 3-ketodihydrosphingosine reductase (Kdsr) of Mus musculus (Mouse).